The following is a 498-amino-acid chain: Glutamyl-tRNA(Gln) amidotransferase subunit A (498 aa).

Catalysis depends on charge relay system residues Lys-79 and Ser-154. The active-site Acyl-ester intermediate is the Ser-178.

It belongs to the amidase family. GatA subfamily. In terms of assembly, heterotrimer of A, B and C subunits.

It catalyses the reaction L-glutamyl-tRNA(Gln) + L-glutamine + ATP + H2O = L-glutaminyl-tRNA(Gln) + L-glutamate + ADP + phosphate + H(+). Allows the formation of correctly charged Gln-tRNA(Gln) through the transamidation of misacylated Glu-tRNA(Gln) in organisms which lack glutaminyl-tRNA synthetase. The reaction takes place in the presence of glutamine and ATP through an activated gamma-phospho-Glu-tRNA(Gln). The chain is Glutamyl-tRNA(Gln) amidotransferase subunit A from Psychrobacter cryohalolentis (strain ATCC BAA-1226 / DSM 17306 / VKM B-2378 / K5).